The primary structure comprises 595 residues: Torsin-1A-interacting protein 1 (595 aa).

The disordered stretch occupies residues 1 to 221 (MAGERWQAEG…GNTKTNEREA (221 aa)). Residues 1–351 (MAGERWQAEG…NEPSVKIKWW (351 aa)) are Nuclear-facing. Over residues 24 to 38 (PIREGRRRLDPRNGD) the composition is skewed to basic and acidic residues. Phosphoserine is present on Ser60. Basic and acidic residues-rich tracts occupy residues 70-101 (FEPR…EVRE) and 115-132 (RAQE…RLEQ). Polar residues predominate over residues 133–143 (HSQQPQLSPAT). Phosphoserine occurs at positions 134, 140, 151, 153, 154, and 155. Over residues 204–215 (LDSTYQTNGNTK) the composition is skewed to polar residues. Thr235 is modified (phosphothreonine). 3 positions are modified to phosphoserine: Ser241, Ser244, and Ser255. 2 disordered regions span residues 250–286 (ARSS…PAHE) and 319–340 (IQKS…AIHH). A compositionally biased stretch (basic and acidic residues) spans 251-262 (RSSDSLESRDEA). The span at 319 to 335 (IQKSNFGNQSPSTSRPQ) shows a compositional bias: polar residues. Residue Lys321 forms a Glycyl lysine isopeptide (Lys-Gly) (interchain with G-Cter in SUMO2) linkage. Ser328 carries the post-translational modification Phosphoserine. The chain crosses the membrane as a helical span at residues 352–372 (LLGLVAILAVGLFWFFHTPAV). An interaction with TOR1A region spans residues 368–595 (HTPAVETTAV…ENTLKAGSCL (228 aa)). Positions 373-400 (ETTAVQEFQNQMKQLQSKYQSQNEKLWK) form a coiled coil. Residues 373–595 (ETTAVQEFQN…ENTLKAGSCL (223 aa)) are Perinuclear space-facing. Asn411 is a glycosylation site (N-linked (GlcNAc...) asparagine).

The protein belongs to the TOR1AIP family. As to quaternary structure, interacts with ATP1B4. Interacts with TOR1A (ATP-bound). Interacts with TOR1B, TOR2A and TOR3A. Interacts with VIM. As to expression, expressed in the spinal cord and liver (at protein level).

It is found in the nucleus inner membrane. Its function is as follows. Required for nuclear membrane integrity. Induces TOR1A and TOR1B ATPase activity and is required for their location on the nuclear membrane. Binds to A- and B-type lamins. Possible role in membrane attachment and assembly of the nuclear lamina. This is Torsin-1A-interacting protein 1 (Tor1aip1) from Mus musculus (Mouse).